A 237-amino-acid chain; its full sequence is Ribonuclease PH (237 aa).

Residues R86 and 124–126 contribute to the phosphate site; that span reads GTR.

The protein belongs to the RNase PH family. In terms of assembly, homohexameric ring arranged as a trimer of dimers.

It carries out the reaction tRNA(n+1) + phosphate = tRNA(n) + a ribonucleoside 5'-diphosphate. In terms of biological role, phosphorolytic 3'-5' exoribonuclease that plays an important role in tRNA 3'-end maturation. Removes nucleotide residues following the 3'-CCA terminus of tRNAs; can also add nucleotides to the ends of RNA molecules by using nucleoside diphosphates as substrates, but this may not be physiologically important. Probably plays a role in initiation of 16S rRNA degradation (leading to ribosome degradation) during starvation. The sequence is that of Ribonuclease PH from Shewanella piezotolerans (strain WP3 / JCM 13877).